The primary structure comprises 489 residues: Membrane-bound lytic murein transglycosylase F (489 aa).

An N-terminal signal peptide occupies residues 1-32 (MFALTAYRLRCAAWLLATGIFLLLAGCSEAKA). The interval 33–268 (PTALERVQKE…RLKDRYYGHV (236 aa)) is non-LT domain. The tract at residues 269 to 489 (DVLGYVGAYT…PEEDSGDEKL (221 aa)) is LT domain. Glu-315 is a catalytic residue. Residues 466–489 (AESGLHLPGVNKTRPEEDSGDEKL) form a disordered region. Residues 478-489 (TRPEEDSGDEKL) show a composition bias toward basic and acidic residues.

The protein in the N-terminal section; belongs to the bacterial solute-binding protein 3 family. In the C-terminal section; belongs to the transglycosylase Slt family.

The protein resides in the cell outer membrane. It carries out the reaction Exolytic cleavage of the (1-&gt;4)-beta-glycosidic linkage between N-acetylmuramic acid (MurNAc) and N-acetylglucosamine (GlcNAc) residues in peptidoglycan, from either the reducing or the non-reducing ends of the peptidoglycan chains, with concomitant formation of a 1,6-anhydrobond in the MurNAc residue.. Functionally, murein-degrading enzyme that degrades murein glycan strands and insoluble, high-molecular weight murein sacculi, with the concomitant formation of a 1,6-anhydromuramoyl product. Lytic transglycosylases (LTs) play an integral role in the metabolism of the peptidoglycan (PG) sacculus. Their lytic action creates space within the PG sacculus to allow for its expansion as well as for the insertion of various structures such as secretion systems and flagella. The chain is Membrane-bound lytic murein transglycosylase F from Pseudomonas aeruginosa (strain UCBPP-PA14).